The sequence spans 114 residues: RNA polymerase-binding protein RbpA (114 aa).

The protein belongs to the RNA polymerase-binding protein RbpA family. In terms of assembly, monomer. Forms a complex with the RNAP catalytic core, specifically with the beta subunit (RpoB); its binding site may overlap with that of Rif. May bind free principal sigma factors.

Functionally, binds to RNA polymerase (RNAP), probably stimulating transcriptions from principal, but not alternative sigma factor promoters. Partially restores transcription in the presence of rifampicin (Rif) in vitro; overexpression leads to an increase in the Rif tolerance in vivo, with smaller colonies. Seems to act by removing Rif from its binding site and preventing its further binding. No longer stimulates transcription in Rif-resistant RNA polymerase (with mutations in rpoB). This Mycolicibacterium smegmatis (strain ATCC 700084 / mc(2)155) (Mycobacterium smegmatis) protein is RNA polymerase-binding protein RbpA.